The chain runs to 718 residues: Manganese-exporting P-type ATPase (718 aa).

The HMA domain maps to 11–78; it reads GRMRVKVDWV…AIKGAAHVAA (68 aa). 6 helical membrane passes run 87–105, 128–146, 154–168, 177–191, 327–351, and 357–375; these read HSAE…GGVA, TVAT…RGAL, AGTD…VASL, LTVL…YLQD, VGEN…LITG, and MTML…TPTA. The active-site 4-aspartylphosphate intermediate is the D408. Mg(2+) is bound by residues D408, T410, and D610. 2 consecutive transmembrane segments (helical) span residues 661–680 and 690–709; these read AVDV…AAGL and PVLA…ANSS.

It belongs to the cation transport ATPase (P-type) (TC 3.A.3) family. Type IB subfamily.

The protein resides in the cell membrane. The enzyme catalyses Mn(2+)(in) + ATP + H2O = Mn(2+)(out) + ADP + phosphate + H(+). Functionally, high affinity, slow turnover Mn(2+) transporting ATPase. The protein is Manganese-exporting P-type ATPase (ctpC) of Mycobacterium bovis (strain ATCC BAA-935 / AF2122/97).